Reading from the N-terminus, the 407-residue chain is Probable tRNA sulfurtransferase (407 aa).

In terms of domain architecture, THUMP spans 61–165 (NEITYRLSKI…LDAIYMYEEV (105 aa)). Residues 183–184 (ML), 208–209 (HF), arginine 265, glycine 287, and glutamine 296 contribute to the ATP site.

Belongs to the ThiI family.

Its subcellular location is the cytoplasm. The enzyme catalyses [ThiI sulfur-carrier protein]-S-sulfanyl-L-cysteine + a uridine in tRNA + 2 reduced [2Fe-2S]-[ferredoxin] + ATP + H(+) = [ThiI sulfur-carrier protein]-L-cysteine + a 4-thiouridine in tRNA + 2 oxidized [2Fe-2S]-[ferredoxin] + AMP + diphosphate. It carries out the reaction [ThiS sulfur-carrier protein]-C-terminal Gly-Gly-AMP + S-sulfanyl-L-cysteinyl-[cysteine desulfurase] + AH2 = [ThiS sulfur-carrier protein]-C-terminal-Gly-aminoethanethioate + L-cysteinyl-[cysteine desulfurase] + A + AMP + 2 H(+). The protein operates within cofactor biosynthesis; thiamine diphosphate biosynthesis. Functionally, catalyzes the ATP-dependent transfer of a sulfur to tRNA to produce 4-thiouridine in position 8 of tRNAs, which functions as a near-UV photosensor. Also catalyzes the transfer of sulfur to the sulfur carrier protein ThiS, forming ThiS-thiocarboxylate. This is a step in the synthesis of thiazole, in the thiamine biosynthesis pathway. The sulfur is donated as persulfide by IscS. In Staphylococcus aureus (strain N315), this protein is Probable tRNA sulfurtransferase.